The sequence spans 451 residues: Probable D-serine dehydratase (451 aa).

The segment at 1-55 (MPGRTRPSCRLAITFTPRPDSATPRAGRAAPATGRRSNRSRSTLSATASPMPRRP) is disordered. Over residues 22–35 (ATPRAGRAAPATGR) the composition is skewed to low complexity. Lysine 118 is subject to N6-(pyridoxal phosphate)lysine.

This sequence belongs to the serine/threonine dehydratase family. DsdA subfamily. It depends on pyridoxal 5'-phosphate as a cofactor.

It carries out the reaction D-serine = pyruvate + NH4(+). This is Probable D-serine dehydratase from Paracidovorax citrulli (strain AAC00-1) (Acidovorax citrulli).